We begin with the raw amino-acid sequence, 217 residues long: Large ribosomal subunit protein uL3 (217 aa).

It belongs to the universal ribosomal protein uL3 family. Part of the 50S ribosomal subunit. Forms a cluster with proteins L14 and L19.

Its function is as follows. One of the primary rRNA binding proteins, it binds directly near the 3'-end of the 23S rRNA, where it nucleates assembly of the 50S subunit. In Mycobacterium sp. (strain KMS), this protein is Large ribosomal subunit protein uL3.